Consider the following 210-residue polypeptide: S-norcoclaurine synthase (210 aa).

An N-terminal signal peptide occupies residues 1 to 19 (MMKMEVVFVFLMLLGTINC). A dopamine-binding site is contributed by 108-110 (YKE). K122 serves as the catalytic Proton donor. D141 serves as a coordination point for (4-hydroxyphenyl)acetaldehyde.

This sequence belongs to the BetVI family. As to quaternary structure, concentration-dependent dimerization, but mainly monomeric at concentrations around 10 uM. Expressed most abundantly in the rhizomes and to a lesser extent in petioles, roots, leaves and flower buds.

The enzyme catalyses (4-hydroxyphenyl)acetaldehyde + dopamine = (S)-norcoclaurine + H2O. Functionally, involved in the biosynthesis of the common precursor of all benzylisoquinoline alkaloids such as morphine, sanguinarine, codeine or berberine. Condenses dopamine and 4-hydroxyphenylacetaldehyde. The protein is S-norcoclaurine synthase of Thalictrum flavum subsp. glaucum (Yellow meadow rue).